We begin with the raw amino-acid sequence, 248 residues long: Triosephosphate isomerase (248 aa).

2 residues coordinate substrate: N10 and K12. Catalysis depends on H95, which acts as the Electrophile. E165 (proton acceptor) is an active-site residue.

This sequence belongs to the triosephosphate isomerase family. In terms of assembly, homodimer.

It carries out the reaction D-glyceraldehyde 3-phosphate = dihydroxyacetone phosphate. It functions in the pathway carbohydrate biosynthesis; gluconeogenesis. Its pathway is carbohydrate degradation; glycolysis; D-glyceraldehyde 3-phosphate from glycerone phosphate: step 1/1. The sequence is that of Triosephosphate isomerase (TPI1) from Zygosaccharomyces bailii.